The chain runs to 461 residues: Peptidyl-prolyl cis-trans isomerase-like 4 (461 aa).

A PPIase cyclophilin-type domain is found at 1–171 (MSVLLETSLG…KDIRIRHTVI (171 aa)). Residues 248–326 (NVLFVCKLNP…HRIHVDFSQS (79 aa)) form the RRM domain. Residues 372 to 461 (NYNMVFDKND…DDRYRDRRRR (90 aa)) are disordered. Basic and acidic residues-rich tracts occupy residues 378–392 (DKND…ERSY) and 400–461 (NYRD…RRRR).

It belongs to the cyclophilin-type PPIase family. PPIL4 subfamily.

It is found in the nucleus. The enzyme catalyses [protein]-peptidylproline (omega=180) = [protein]-peptidylproline (omega=0). Its function is as follows. PPIases accelerate the folding of proteins. It catalyzes the cis-trans isomerization of proline imidic peptide bonds in oligopeptides. The sequence is that of Peptidyl-prolyl cis-trans isomerase-like 4 (cyp6) from Emericella nidulans (strain FGSC A4 / ATCC 38163 / CBS 112.46 / NRRL 194 / M139) (Aspergillus nidulans).